We begin with the raw amino-acid sequence, 344 residues long: Mitogen-activated protein kinase mpkC (344 aa).

Residues 19–298 (YANVQPVGLG…AETALQHPYL (280 aa)) form the Protein kinase domain. Residues 25 to 33 (VGLGAFGLV) and Lys-48 contribute to the ATP site. The active-site Proton acceptor is Asp-140. Thr-170 carries the post-translational modification Phosphothreonine. Residues 170-172 (TGY) carry the TXY motif. At Tyr-172 the chain carries Phosphotyrosine.

This sequence belongs to the protein kinase superfamily. Ser/Thr protein kinase family. MAP kinase subfamily. HOG1 sub-subfamily. Mg(2+) serves as cofactor. Dually phosphorylated on Thr-170 and Tyr-172, which activates the enzyme.

It catalyses the reaction L-seryl-[protein] + ATP = O-phospho-L-seryl-[protein] + ADP + H(+). It carries out the reaction L-threonyl-[protein] + ATP = O-phospho-L-threonyl-[protein] + ADP + H(+). Activated by tyrosine and threonine phosphorylation. Its function is as follows. Mitogen-activated protein kinase required for growth on media where sorbitol or mannitol is the sole carbon source. The sequence is that of Mitogen-activated protein kinase mpkC (mpkC) from Aspergillus oryzae (strain ATCC 42149 / RIB 40) (Yellow koji mold).